The primary structure comprises 217 residues: Small ribosomal subunit protein uS3 (217 aa).

One can recognise a KH type-2 domain in the interval 38–106 (IRKFIDNELK…KVHINVIEIK (69 aa)).

The protein belongs to the universal ribosomal protein uS3 family. Part of the 30S ribosomal subunit. Forms a tight complex with proteins S10 and S14.

Functionally, binds the lower part of the 30S subunit head. Binds mRNA in the 70S ribosome, positioning it for translation. In Staphylococcus haemolyticus (strain JCSC1435), this protein is Small ribosomal subunit protein uS3.